The primary structure comprises 176 residues: Cytochrome b (176 aa).

The next 3 membrane-spanning stretches (helical) occupy residues 33 to 53, 77 to 98, and 113 to 133; these read FGSL…FLAM, WLLR…YLHI, and WNVG…GYVL. The heme b site is built by histidine 83 and histidine 97.

The protein belongs to the cytochrome b family. The cytochrome bc1 complex contains 11 subunits: 3 respiratory subunits (MT-CYB, CYC1 and UQCRFS1), 2 core proteins (UQCRC1 and UQCRC2) and 6 low-molecular weight proteins (UQCRH/QCR6, UQCRB/QCR7, UQCRQ/QCR8, UQCR10/QCR9, UQCR11/QCR10 and a cleavage product of UQCRFS1). This cytochrome bc1 complex then forms a dimer. It depends on heme b as a cofactor.

The protein localises to the mitochondrion inner membrane. Functionally, component of the ubiquinol-cytochrome c reductase complex (complex III or cytochrome b-c1 complex) that is part of the mitochondrial respiratory chain. The b-c1 complex mediates electron transfer from ubiquinol to cytochrome c. Contributes to the generation of a proton gradient across the mitochondrial membrane that is then used for ATP synthesis. The sequence is that of Cytochrome b (MT-CYB) from Eumops glaucinus (Wagner's mastiff bat).